Reading from the N-terminus, the 409-residue chain is Probable glutaryl-CoA dehydrogenase, mitochondrial (409 aa).

Substrate is bound at residue 110 to 111; it reads RS. Residues 149-152, S158, and 184-186 contribute to the FAD site; these read FGLT and WIS. A substrate-binding site is contributed by S158. Substrate contacts are provided by residues 261 to 265 and R268; that span reads FGCLN. E388 acts as the Proton acceptor in catalysis. FAD is bound by residues T390 and F408.

This sequence belongs to the acyl-CoA dehydrogenase family. FAD is required as a cofactor.

The protein localises to the mitochondrion matrix. The enzyme catalyses glutaryl-CoA + oxidized [electron-transfer flavoprotein] + 2 H(+) = (2E)-butenoyl-CoA + reduced [electron-transfer flavoprotein] + CO2. The protein operates within amino-acid metabolism; lysine degradation. It functions in the pathway amino-acid metabolism; tryptophan metabolism. In Caenorhabditis elegans, this protein is Probable glutaryl-CoA dehydrogenase, mitochondrial.